Here is a 66-residue protein sequence, read N- to C-terminus: Phylloseptin-Az3 (66 aa).

Positions 1–22 are cleaved as a signal peptide; it reads MAFLKKSLFLVLFLGLVSLSIC. A propeptide spanning residues 23–44 is cleaved from the precursor; that stretch reads EEEKRETEEEEYNQEDDDKSEE. Phe65 bears the Phenylalanine amide mark.

As to expression, expressed by the skin glands.

Its subcellular location is the secreted. Functionally, has antimicrobial activity. This is Phylloseptin-Az3 from Pithecopus azureus (Orange-legged monkey tree frog).